A 188-amino-acid chain; its full sequence is Peptide methionine sulfoxide reductase MsrA (188 aa).

The tract at residues 1–25 (MEGNEKAEQKNATSEESTDIFENPG) is disordered. Cys37 is an active-site residue.

It belongs to the MsrA Met sulfoxide reductase family.

It carries out the reaction L-methionyl-[protein] + [thioredoxin]-disulfide + H2O = L-methionyl-(S)-S-oxide-[protein] + [thioredoxin]-dithiol. The enzyme catalyses [thioredoxin]-disulfide + L-methionine + H2O = L-methionine (S)-S-oxide + [thioredoxin]-dithiol. Functionally, has an important function as a repair enzyme for proteins that have been inactivated by oxidation. Catalyzes the reversible oxidation-reduction of methionine sulfoxide in proteins to methionine. This is Peptide methionine sulfoxide reductase MsrA from Methanosarcina acetivorans (strain ATCC 35395 / DSM 2834 / JCM 12185 / C2A).